Here is a 284-residue protein sequence, read N- to C-terminus: Nucleotide-binding protein Sden_0486 (284 aa).

ATP is bound at residue 8 to 15; the sequence is GRSGSGKS. 56–59 is a GTP binding site; the sequence is DVRN.

Belongs to the RapZ-like family.

Functionally, displays ATPase and GTPase activities. This Shewanella denitrificans (strain OS217 / ATCC BAA-1090 / DSM 15013) protein is Nucleotide-binding protein Sden_0486.